Here is a 212-residue protein sequence, read N- to C-terminus: Thymidylate kinase (212 aa).

11 to 18 is an ATP binding site; it reads GPDGAGKT.

Belongs to the thymidylate kinase family.

The enzyme catalyses dTMP + ATP = dTDP + ADP. Its function is as follows. Phosphorylation of dTMP to form dTDP in both de novo and salvage pathways of dTTP synthesis. This chain is Thymidylate kinase, found in Streptococcus mutans serotype c (strain ATCC 700610 / UA159).